The sequence spans 236 residues: 15,16-dihydrobiliverdin:ferredoxin oxidoreductase (236 aa).

It belongs to the HY2 family.

It catalyses the reaction 15,16-dihydrobiliverdin + oxidized 2[4Fe-4S]-[ferredoxin] = biliverdin IXalpha + reduced 2[4Fe-4S]-[ferredoxin] + 2 H(+). Functionally, catalyzes the two-electron reduction of biliverdin IX-alpha at the C15 methine bridge. The polypeptide is 15,16-dihydrobiliverdin:ferredoxin oxidoreductase (Prochlorococcus marinus (strain MIT 9515)).